The following is a 647-amino-acid chain: Probable cobalt/nickel-exporting P-type ATPase (647 aa).

5 helical membrane passes run tryptophan 33–proline 53, alanine 55–valine 75, alanine 94–phenylalanine 114, alanine 260–leucine 280, and methionine 291–isoleucine 311. Catalysis depends on aspartate 339, which acts as the 4-aspartylphosphate intermediate. Mg(2+) is bound by residues aspartate 532 and aspartate 536. A helical transmembrane segment spans residues valine 587–phenylalanine 607.

The protein belongs to the cation transport ATPase (P-type) (TC 3.A.3) family. Type IB subfamily.

It is found in the cell membrane. It carries out the reaction Ni(2+)(out) + ATP + H2O = Ni(2+)(in) + ADP + phosphate + H(+). The enzyme catalyses Co(2+)(out) + ATP + H2O = Co(2+)(in) + ADP + phosphate + H(+). Involved in heavy metal homeostasis. Probably exports nickel and cobalt ions out of the cell. This chain is Probable cobalt/nickel-exporting P-type ATPase (ctpD), found in Mycolicibacterium smegmatis (strain ATCC 700084 / mc(2)155) (Mycobacterium smegmatis).